The following is a 75-amino-acid chain: Large ribosomal subunit protein bL31 (75 aa).

The protein belongs to the bacterial ribosomal protein bL31 family. Type A subfamily. As to quaternary structure, part of the 50S ribosomal subunit.

In terms of biological role, binds the 23S rRNA. In Rhodopseudomonas palustris (strain BisB5), this protein is Large ribosomal subunit protein bL31.